A 482-amino-acid chain; its full sequence is tRNA sulfurtransferase (482 aa).

Residues 61-165 enclose the THUMP domain; it reads LTIRDALTRI…DDRLLLIKGR (105 aa). Residues 183–184, K265, G287, and Q296 contribute to the ATP site; that span reads LI. A disulfide bridge links C344 with C456. A Rhodanese domain is found at 404 to 482; it reads CGPNDVILDI…GFNNVKVYRP (79 aa). Residue C456 is the Cysteine persulfide intermediate of the active site.

Belongs to the ThiI family.

The protein localises to the cytoplasm. The catalysed reaction is [ThiI sulfur-carrier protein]-S-sulfanyl-L-cysteine + a uridine in tRNA + 2 reduced [2Fe-2S]-[ferredoxin] + ATP + H(+) = [ThiI sulfur-carrier protein]-L-cysteine + a 4-thiouridine in tRNA + 2 oxidized [2Fe-2S]-[ferredoxin] + AMP + diphosphate. It carries out the reaction [ThiS sulfur-carrier protein]-C-terminal Gly-Gly-AMP + S-sulfanyl-L-cysteinyl-[cysteine desulfurase] + AH2 = [ThiS sulfur-carrier protein]-C-terminal-Gly-aminoethanethioate + L-cysteinyl-[cysteine desulfurase] + A + AMP + 2 H(+). It participates in cofactor biosynthesis; thiamine diphosphate biosynthesis. Catalyzes the ATP-dependent transfer of a sulfur to tRNA to produce 4-thiouridine in position 8 of tRNAs, which functions as a near-UV photosensor. Also catalyzes the transfer of sulfur to the sulfur carrier protein ThiS, forming ThiS-thiocarboxylate. This is a step in the synthesis of thiazole, in the thiamine biosynthesis pathway. The sulfur is donated as persulfide by IscS. In Shigella dysenteriae serotype 1 (strain Sd197), this protein is tRNA sulfurtransferase.